A 90-amino-acid polypeptide reads, in one-letter code: Mitochondrial import inner membrane translocase subunit Tim8 A (90 aa).

Positions 36–59 (CWEKCMDKPGPKLDSRTEVCFVNC) match the Twin CX3C motif motif. Cystine bridges form between Cys36-Cys59 and Cys40-Cys55.

Belongs to the small Tim family. As to quaternary structure, heterohexamer; composed of 3 copies of TIMM8A and 3 copies of TIMM13, named soluble 70 kDa complex. Associates with the TIM22 complex, whose core is composed of TIMM22.

The protein resides in the mitochondrion inner membrane. Mitochondrial intermembrane chaperone that participates in the import and insertion of some multi-pass transmembrane proteins into the mitochondrial inner membrane. Also required for the transfer of beta-barrel precursors from the TOM complex to the sorting and assembly machinery (SAM complex) of the outer membrane. Acts as a chaperone-like protein that protects the hydrophobic precursors from aggregation and guide them through the mitochondrial intermembrane space. The TIMM8-TIMM13 complex mediates the import of some proteins while the predominant TIMM9-TIMM10 70 kDa complex mediates the import of much more proteins. The protein is Mitochondrial import inner membrane translocase subunit Tim8 A (timm8a) of Danio rerio (Zebrafish).